Here is a 307-residue protein sequence, read N- to C-terminus: UDP-3-O-acyl-N-acetylglucosamine deacetylase (307 aa).

Positions 78, 241, and 245 each coordinate Zn(2+). The active-site Proton donor is His268.

Belongs to the LpxC family. Zn(2+) serves as cofactor.

The catalysed reaction is a UDP-3-O-[(3R)-3-hydroxyacyl]-N-acetyl-alpha-D-glucosamine + H2O = a UDP-3-O-[(3R)-3-hydroxyacyl]-alpha-D-glucosamine + acetate. The protein operates within glycolipid biosynthesis; lipid IV(A) biosynthesis; lipid IV(A) from (3R)-3-hydroxytetradecanoyl-[acyl-carrier-protein] and UDP-N-acetyl-alpha-D-glucosamine: step 2/6. Catalyzes the hydrolysis of UDP-3-O-myristoyl-N-acetylglucosamine to form UDP-3-O-myristoylglucosamine and acetate, the committed step in lipid A biosynthesis. The polypeptide is UDP-3-O-acyl-N-acetylglucosamine deacetylase (Acidovorax sp. (strain JS42)).